A 78-amino-acid polypeptide reads, in one-letter code: NAD(P)H-quinone oxidoreductase subunit O (78 aa).

Belongs to the complex I NdhO subunit family. As to quaternary structure, NDH-1 can be composed of about 15 different subunits; different subcomplexes with different compositions have been identified which probably have different functions.

The protein localises to the cellular thylakoid membrane. The enzyme catalyses a plastoquinone + NADH + (n+1) H(+)(in) = a plastoquinol + NAD(+) + n H(+)(out). It carries out the reaction a plastoquinone + NADPH + (n+1) H(+)(in) = a plastoquinol + NADP(+) + n H(+)(out). NDH-1 shuttles electrons from an unknown electron donor, via FMN and iron-sulfur (Fe-S) centers, to quinones in the respiratory and/or the photosynthetic chain. The immediate electron acceptor for the enzyme in this species is believed to be plastoquinone. Couples the redox reaction to proton translocation, and thus conserves the redox energy in a proton gradient. Cyanobacterial NDH-1 also plays a role in inorganic carbon-concentration. In Prochlorococcus marinus (strain MIT 9312), this protein is NAD(P)H-quinone oxidoreductase subunit O.